A 174-amino-acid polypeptide reads, in one-letter code: Crossover junction endodeoxyribonuclease RuvC (174 aa).

Residues D8, E67, and D139 contribute to the active site. Mg(2+) is bound by residues D8, E67, and D139.

The protein belongs to the RuvC family. Homodimer which binds Holliday junction (HJ) DNA. The HJ becomes 2-fold symmetrical on binding to RuvC with unstacked arms; it has a different conformation from HJ DNA in complex with RuvA. In the full resolvosome a probable DNA-RuvA(4)-RuvB(12)-RuvC(2) complex forms which resolves the HJ. Mg(2+) is required as a cofactor.

It is found in the cytoplasm. The catalysed reaction is Endonucleolytic cleavage at a junction such as a reciprocal single-stranded crossover between two homologous DNA duplexes (Holliday junction).. Its function is as follows. The RuvA-RuvB-RuvC complex processes Holliday junction (HJ) DNA during genetic recombination and DNA repair. Endonuclease that resolves HJ intermediates. Cleaves cruciform DNA by making single-stranded nicks across the HJ at symmetrical positions within the homologous arms, yielding a 5'-phosphate and a 3'-hydroxyl group; requires a central core of homology in the junction. The consensus cleavage sequence is 5'-(A/T)TT(C/G)-3'. Cleavage occurs on the 3'-side of the TT dinucleotide at the point of strand exchange. HJ branch migration catalyzed by RuvA-RuvB allows RuvC to scan DNA until it finds its consensus sequence, where it cleaves and resolves the cruciform DNA. This is Crossover junction endodeoxyribonuclease RuvC from Pseudomonas putida (strain GB-1).